Here is a 433-residue protein sequence, read N- to C-terminus: MWDIAKVKASIKPFVFALGRFFGNLYKEFVEKGCQKSAAALTYMSLFAMVPLMAVFYSMFSMFPAFDGVAQQLQDMIFSHFVPETGSEVQQYLANFSQQARNLSAAGAGLLVVTAYLMLTNIEKTFNAIWGVKAARRGITSFLLYWAVLTIGPLLLGAGLAMSTYLLSLKIIVNEYDAIGVTNLFFSYLPLFTTSAAFTLLFAAVPNCRVPIKFALIGGILTAVCFELLKIGFGWVVANSSFSQIYGAFAVVPLFLLWVNLLWMIILGGAVFVRTLAERGYAHSSSRYTDLMAVLQILAIFKEKSRTGESVTDGDCVRAGVGLVHWQQLRSKLTEKNWIAVTDSGFYVLCRDLSDVTVWDAACLVGATLAELEKTPRKRSRDGEWREEFSKRKDLLADDAKAHYGISLQALFSPQQVEELLEELPDEQSEKSK.

The next 6 helical transmembrane spans lie at 46–66 (LFAMVPLMAVFYSMFSMFPAF), 103–123 (LSAAGAGLLVVTAYLMLTNIE), 142–162 (FLLYWAVLTIGPLLLGAGLAM), 185–205 (FFSYLPLFTTSAAFTLLFAAV), 217–237 (IGGILTAVCFELLKIGFGWVV), and 247–267 (GAFAVVPLFLLWVNLLWMIIL).

The protein belongs to the UPF0761 family.

It localises to the cell inner membrane. This is UPF0761 membrane protein Sde_0901 from Saccharophagus degradans (strain 2-40 / ATCC 43961 / DSM 17024).